A 445-amino-acid polypeptide reads, in one-letter code: MQGLYIKSYGCQMNVYDSLIIENIIKPLGFSIVNEPSEADIVILNTCHIREKAAEKLYSELGRIRKIQETKNLTIVVAGCVAQAEGTEIFTRAPFVDIVVGPQSIHTLPELIVKARKIKKQIINIDFPVISKFDAIAVEEYTKNQKVSAFISVQEGCNKFCSFCVVPYTRGEEYSRTVEAIFKEALILADSGIKEITLIGQNVNAYHGTYKGNEWDLGRLIQHIAKISSIERIYYTTSHPRDMHESLYEAHGIEKKLIPFIHLPVQSGSNKILRKMNRKHTAEEYINIIKTLRKHRSDIAYSSDFIVGFPGETDEDFENTIQLIEEVKFSQAYSFKYSPRPGTPSAEYTSQIPDEIKSQRLTKLQELVHKQQLEFNKKMIGETHPVLFYKKGKFDNQIIGKTPYMQSCYINTENPDLYYNKIVPIKITDAHKNHLTGIIPNTLPV.

The MTTase N-terminal domain maps to 2 to 117 (QGLYIKSYGC…LPELIVKARK (116 aa)). [4Fe-4S] cluster is bound by residues Cys-11, Cys-47, Cys-80, Cys-157, Cys-161, and Cys-164. Residues 143–374 (KNQKVSAFIS…QELVHKQQLE (232 aa)) form the Radical SAM core domain. In terms of domain architecture, TRAM spans 377-441 (KKMIGETHPV…KNHLTGIIPN (65 aa)).

It belongs to the methylthiotransferase family. MiaB subfamily. In terms of assembly, monomer. [4Fe-4S] cluster is required as a cofactor.

It localises to the cytoplasm. The enzyme catalyses N(6)-dimethylallyladenosine(37) in tRNA + (sulfur carrier)-SH + AH2 + 2 S-adenosyl-L-methionine = 2-methylsulfanyl-N(6)-dimethylallyladenosine(37) in tRNA + (sulfur carrier)-H + 5'-deoxyadenosine + L-methionine + A + S-adenosyl-L-homocysteine + 2 H(+). Functionally, catalyzes the methylthiolation of N6-(dimethylallyl)adenosine (i(6)A), leading to the formation of 2-methylthio-N6-(dimethylallyl)adenosine (ms(2)i(6)A) at position 37 in tRNAs that read codons beginning with uridine. The polypeptide is tRNA-2-methylthio-N(6)-dimethylallyladenosine synthase (Ehrlichia ruminantium (strain Welgevonden)).